The primary structure comprises 88 residues: Small ribosomal subunit protein bS20 (88 aa).

Positions 1–23 (MPNTKSAEKALRVADANRQENRR) are enriched in basic and acidic residues. Disordered regions lie at residues 1–28 (MPNT…KSQV) and 69–88 (PKNA…QAAK). Positions 71 to 81 (NAARRKSRLMK) are enriched in basic residues.

It belongs to the bacterial ribosomal protein bS20 family.

Binds directly to 16S ribosomal RNA. This chain is Small ribosomal subunit protein bS20, found in Dehalococcoides mccartyi (strain ATCC BAA-2266 / KCTC 15142 / 195) (Dehalococcoides ethenogenes (strain 195)).